Reading from the N-terminus, the 29-residue chain is Cytochrome b6-f complex subunit 8 (29 aa).

Residues 3 to 23 (ILALGWVSVLALFTWSIAMVV) traverse the membrane as a helical segment.

It belongs to the PetN family. In terms of assembly, the 4 large subunits of the cytochrome b6-f complex are cytochrome b6, subunit IV (17 kDa polypeptide, PetD), cytochrome f and the Rieske protein, while the 4 small subunits are PetG, PetL, PetM and PetN. The complex functions as a dimer.

The protein localises to the cellular thylakoid membrane. Functionally, component of the cytochrome b6-f complex, which mediates electron transfer between photosystem II (PSII) and photosystem I (PSI), cyclic electron flow around PSI, and state transitions. The chain is Cytochrome b6-f complex subunit 8 from Gloeothece citriformis (strain PCC 7424) (Cyanothece sp. (strain PCC 7424)).